The chain runs to 279 residues: Phycobilisome rod-core linker polypeptide CpcG1 (279 aa).

The 179-residue stretch at 11 to 189 folds into the PBS-linker domain; the sequence is TTQNQRVEGY…YWRNRLLEQF (179 aa).

The protein belongs to the phycobilisome linker protein family. The phycobilisome is a hemidiscoidal structure that is composed of two distinct substructures: a core complex and a number of rods radiating from the core.

The protein localises to the cellular thylakoid membrane. Rod-core linker protein required for attachment of phycocyanin to allophycocyanin in cores of phycobilisomes. Functionally, linker polypeptides determine the state of aggregation and the location of the disk-shaped phycobiliprotein units within the phycobilisome and modulate their spectroscopic properties in order to mediate a directed and optimal energy transfer. The chain is Phycobilisome rod-core linker polypeptide CpcG1 (cpcG1) from Mastigocladus laminosus (Fischerella sp.).